A 184-amino-acid polypeptide reads, in one-letter code: Interferon alpha-3 (184 aa).

An N-terminal signal peptide occupies residues 1-23 (MALPVSLLMALVVLSCHSSCSLG). 2 disulfide bridges follow: cysteine 24–cysteine 122 and cysteine 52–cysteine 162.

Belongs to the alpha/beta interferon family.

It localises to the secreted. Produced by macrophages, IFN-alpha have antiviral activities. Interferon stimulates the production of two enzymes: a protein kinase and an oligoadenylate synthetase. This is Interferon alpha-3 from Equus caballus (Horse).